Consider the following 690-residue polypeptide: Guanylate cyclase soluble subunit alpha-1 (690 aa).

Ser267 carries the post-translational modification Phosphoserine. A Guanylate cyclase domain is found at 481-608 (TMLFSDIVGF…NNVTLANKFE (128 aa)).

It belongs to the adenylyl cyclase class-4/guanylyl cyclase family. As to quaternary structure, the active enzyme is formed by a heterodimer of an alpha and a beta subunit. Heterodimer with GUCY1B1. Mg(2+) is required as a cofactor. Requires Mn(2+) as cofactor.

It is found in the cytoplasm. The catalysed reaction is GTP = 3',5'-cyclic GMP + diphosphate. Activated by nitric oxide in the presence of magnesium or manganese ions. This is Guanylate cyclase soluble subunit alpha-1 (GUCY1A1) from Canis lupus familiaris (Dog).